The chain runs to 307 residues: Retron Ec86 putative ribosyltransferase/DNA-binding protein (307 aa).

Its function is as follows. Possible ribosyltransferase/DNA-binding component of antiviral defense system retron Ec86, composed of a non-coding RNA (ncRNA), a ribosyltransferase/DNA-binding protein and a reverse transcriptase (RT). Expression of the 3-gene retron confers protection against bacteriophages T5. At multiplicity of infection (MOI) of 0.02 cultures grow normally when infected with T5 without collapsing, at MOI 2 cultures enter growth stasis. The chain is Retron Ec86 putative ribosyltransferase/DNA-binding protein from Escherichia coli.